The following is a 457-amino-acid chain: Ribosomal protein uS12 methylthiotransferase RimO (457 aa).

One can recognise an MTTase N-terminal domain in the interval 6 to 116; it reads PKVGFVSLGC…VMEAVHAALP (111 aa). [4Fe-4S] cluster is bound by residues Cys-15, Cys-51, Cys-80, Cys-147, Cys-151, and Cys-154. A Radical SAM core domain is found at 133–371; it reads LTPRHYAYLK…AKQAQISALR (239 aa). The 69-residue stretch at 373–441 folds into the TRAM domain; it reads ESKIGSVQQC…EHDLFGDALP (69 aa).

Belongs to the methylthiotransferase family. RimO subfamily. It depends on [4Fe-4S] cluster as a cofactor.

Its subcellular location is the cytoplasm. It catalyses the reaction L-aspartate(89)-[ribosomal protein uS12]-hydrogen + (sulfur carrier)-SH + AH2 + 2 S-adenosyl-L-methionine = 3-methylsulfanyl-L-aspartate(89)-[ribosomal protein uS12]-hydrogen + (sulfur carrier)-H + 5'-deoxyadenosine + L-methionine + A + S-adenosyl-L-homocysteine + 2 H(+). Its function is as follows. Catalyzes the methylthiolation of an aspartic acid residue of ribosomal protein uS12. The protein is Ribosomal protein uS12 methylthiotransferase RimO of Xanthomonas axonopodis pv. citri (strain 306).